The following is a 962-amino-acid chain: Putative RNA Helicase B962L (962 aa).

The region spanning 43-229 is the Helicase ATP-binding domain; it reads IPTSLADRVL…FGIGKENIIL (187 aa). 56–63 serves as a coordination point for ATP; that stretch reads SRTGSGKS. The short motif at 167 to 170 is the DEAH box element; the sequence is DEAH. A Helicase C-terminal domain is found at 253–459; the sequence is ACETALTIHK…TIKKNKEGVF (207 aa). The chain crosses the membrane as a helical span at residues 521–541; sequence GYFWQAAISDIATILAVVSVA.

The protein belongs to the DEAD box helicase family. DEAH subfamily.

It is found in the host membrane. It localises to the virion. The enzyme catalyses ATP + H2O = ADP + phosphate + H(+). The polypeptide is Putative RNA Helicase B962L (African swine fever virus (isolate Warthog/Namibia/Wart80/1980) (ASFV)).